The primary structure comprises 446 residues: Phosphoglucosamine mutase (446 aa).

The active-site Phosphoserine intermediate is Ser100. Ser100, Asp241, Asp243, and Asp245 together coordinate Mg(2+). A Phosphoserine modification is found at Ser100.

Belongs to the phosphohexose mutase family. Mg(2+) serves as cofactor. Activated by phosphorylation.

It carries out the reaction alpha-D-glucosamine 1-phosphate = D-glucosamine 6-phosphate. Its function is as follows. Catalyzes the conversion of glucosamine-6-phosphate to glucosamine-1-phosphate. The protein is Phosphoglucosamine mutase of Methylobacterium nodulans (strain LMG 21967 / CNCM I-2342 / ORS 2060).